Reading from the N-terminus, the 509-residue chain is tRNA-2-methylthio-N(6)-dimethylallyladenosine synthase (509 aa).

The span at methionine 1 to serine 15 shows a compositional bias: polar residues. A disordered region spans residues methionine 1 to tyrosine 23. The region spanning arginine 66–phenylalanine 184 is the MTTase N-terminal domain. [4Fe-4S] cluster contacts are provided by cysteine 75, cysteine 111, cysteine 145, cysteine 221, cysteine 225, and cysteine 228. The region spanning arginine 207–glutamate 437 is the Radical SAM core domain. Positions aspartate 440–glutamate 503 constitute a TRAM domain.

This sequence belongs to the methylthiotransferase family. MiaB subfamily. As to quaternary structure, monomer. It depends on [4Fe-4S] cluster as a cofactor.

The protein localises to the cytoplasm. The enzyme catalyses N(6)-dimethylallyladenosine(37) in tRNA + (sulfur carrier)-SH + AH2 + 2 S-adenosyl-L-methionine = 2-methylsulfanyl-N(6)-dimethylallyladenosine(37) in tRNA + (sulfur carrier)-H + 5'-deoxyadenosine + L-methionine + A + S-adenosyl-L-homocysteine + 2 H(+). Its function is as follows. Catalyzes the methylthiolation of N6-(dimethylallyl)adenosine (i(6)A), leading to the formation of 2-methylthio-N6-(dimethylallyl)adenosine (ms(2)i(6)A) at position 37 in tRNAs that read codons beginning with uridine. In Bacillus anthracis, this protein is tRNA-2-methylthio-N(6)-dimethylallyladenosine synthase.